Consider the following 320-residue polypeptide: GMP reductase (320 aa).

Cys174 serves as the catalytic Thioimidate intermediate. An NADP(+)-binding site is contributed by 203–226; the sequence is IIADGGLRVNGDIAKSIRFGATMC.

The protein belongs to the IMPDH/GMPR family. GuaC type 2 subfamily.

The catalysed reaction is IMP + NH4(+) + NADP(+) = GMP + NADPH + 2 H(+). Its function is as follows. Catalyzes the irreversible NADPH-dependent deamination of GMP to IMP. It functions in the conversion of nucleobase, nucleoside and nucleotide derivatives of G to A nucleotides, and in maintaining the intracellular balance of A and G nucleotides. This chain is GMP reductase, found in Mesoplasma florum (strain ATCC 33453 / NBRC 100688 / NCTC 11704 / L1) (Acholeplasma florum).